The following is a 157-amino-acid chain: Rieske domain-containing protein (157 aa).

The residue at position 1 (Met1) is an N-acetylmethionine. Phosphoserine is present on Ser6. 2 Rieske domains span residues 16–94 (SSVC…TGEG) and 17–131 (SVCV…NIYV). Residues Cys57, His59, Cys80, and His83 each contribute to the [2Fe-2S] cluster site.

[2Fe-2S] cluster serves as cofactor.

The protein is Rieske domain-containing protein (RFESD) of Homo sapiens (Human).